The following is a 349-amino-acid chain: Ribosomal RNA small subunit methyltransferase H (349 aa).

Residues Gly-34–His-36, Asp-54, Phe-81, Asp-102, and Gln-109 each bind S-adenosyl-L-methionine.

This sequence belongs to the methyltransferase superfamily. RsmH family.

It localises to the cytoplasm. The enzyme catalyses cytidine(1402) in 16S rRNA + S-adenosyl-L-methionine = N(4)-methylcytidine(1402) in 16S rRNA + S-adenosyl-L-homocysteine + H(+). In terms of biological role, specifically methylates the N4 position of cytidine in position 1402 (C1402) of 16S rRNA. The polypeptide is Ribosomal RNA small subunit methyltransferase H (Dehalococcoides mccartyi (strain ATCC BAA-2266 / KCTC 15142 / 195) (Dehalococcoides ethenogenes (strain 195))).